An 82-amino-acid chain; its full sequence is Small ribosomal subunit protein uS12 (82 aa).

A 3-methylthioaspartic acid modification is found at aspartate 59.

It belongs to the universal ribosomal protein uS12 family. Part of the 30S ribosomal subunit. Contacts proteins S8 and S17. May interact with IF1 in the 30S initiation complex.

With S4 and S5 plays an important role in translational accuracy. Functionally, interacts with and stabilizes bases of the 16S rRNA that are involved in tRNA selection in the A site and with the mRNA backbone. Located at the interface of the 30S and 50S subunits, it traverses the body of the 30S subunit contacting proteins on the other side and probably holding the rRNA structure together. The combined cluster of proteins S8, S12 and S17 appears to hold together the shoulder and platform of the 30S subunit. The polypeptide is Small ribosomal subunit protein uS12 (rpsL) (Actinobacillus pleuropneumoniae (Haemophilus pleuropneumoniae)).